A 413-amino-acid chain; its full sequence is BSD domain-containing protein 1-A (413 aa).

In terms of domain architecture, BSD spans 146-198 (WLAYWDPEQRKAEISELLVTSPSIRALFTKMVPAAVSHSEFWQRYFYKVHQLE). Composition is skewed to basic and acidic residues over residues 208–219 (KQRADQSVHSEE) and 255–271 (HVEDKSEKTAELNRDHT). Disordered stretches follow at residues 208 to 228 (KQRADQSVHSEEPTWEEEEED) and 255 to 386 (HVED…EFDM). Over residues 274 to 287 (TSPSESSESISPIT) the composition is skewed to low complexity. Over residues 297 to 322 (QTPSKEPSPGTLTVTKENTGAGTDET) the composition is skewed to polar residues. Residues 342–352 (QREDPPSDLRV) show a composition bias toward basic and acidic residues. The segment covering 356 to 375 (NSDSGKSTPSNNGQKGSSTD) has biased composition (polar residues). Over residues 376–386 (ISEDWEKEFDM) the composition is skewed to acidic residues.

The chain is BSD domain-containing protein 1-A (bsdc1-a) from Xenopus laevis (African clawed frog).